The following is a 157-amino-acid chain: MIINETKGKAWHGKVKLADTFLKRFRGLMLVKNVNHALVFVLPAETRANASIHMFFMLSDIDVIWLDSSRRVVDFKTAKKWRLYTPKKAAQYIIEGPVGLIRTLEVEEGDLISWTPTEEREKAVPVKSLIPGKINLNGSKNSIAMVESVKEVKANEV.

This sequence belongs to the UPF0127 family.

This Thermococcus kodakarensis (strain ATCC BAA-918 / JCM 12380 / KOD1) (Pyrococcus kodakaraensis (strain KOD1)) protein is UPF0127 protein TK1120.